A 271-amino-acid chain; its full sequence is Homeobox protein pal-1 (271 aa).

3 disordered regions span residues 1-25 (MSVD…TNVN), 100-135 (PPLS…ASSS), and 178-202 (GSAG…TNNV). 2 stretches are compositionally biased toward low complexity: residues 100–117 (PPLS…YPSP) and 125–135 (STSSGIGASSS). The span at 189-202 (DTKSLPTGPGTNNV) shows a compositional bias: polar residues. Residues 207–266 (ADKYRMVYSDYQRLELEKEFHTSAFITSDRKSQLSTMLSLTERQIKIWFQNRRAKDRRDK) constitute a DNA-binding region (homeobox).

Belongs to the Caudal homeobox family. As to quaternary structure, interacts with tir-1 and let-756.

The protein resides in the nucleus. It is found in the chromosome. The protein localises to the centromere. Its subcellular location is the kinetochore. Transcriptional activator. Interacts with promoter regions for tbx-8.9, tbx-9, elt-1, hnd-1, scrt-1, and vab-7 genes. Binds the sequence ATTTATGAC. Binds to the enhancer region of the hlh-1 gene promoter during embryonic body wall muscle development. Activates the gene for mab-5 in embryo development. Necessary for vab-7 expression in C blastomeres in the posterior of embryos. Required for posterior V6 neuroectoblast cell fate specification during postembryonic neurogenesis (patterning) which generates the characteristic ray lineage during male tail development. Binds to ced-3 promoter and activated expression which is crucial for tail-spike cell death. Has a role in E cell specification in endoderm development and body wall muscle development. This chain is Homeobox protein pal-1, found in Caenorhabditis briggsae.